The primary structure comprises 812 residues: Phospholipase D alpha 1 (812 aa).

Residues M1–L130 form the C2 domain. Residue D190 coordinates Ca(2+). A PLD phosphodiesterase 1 domain is found at T330–R368. Catalysis depends on residues H335, K337, and D342. Position 335 (H335) interacts with a 1,2-diacyl-sn-glycero-3-phosphate. H374 and H408 together coordinate Ca(2+). Residues Q524 and H663 each contribute to the a 1,2-diacyl-sn-glycero-3-phosphate site. A PLD phosphodiesterase 2 domain is found at F658–S685. Active-site residues include H663, K665, and D670. Ca(2+) is bound at residue E724.

This sequence belongs to the phospholipase D family. C2-PLD subfamily. Monomer. Requires Ca(2+) as cofactor.

It carries out the reaction a 1,2-diacyl-sn-glycero-3-phosphocholine + H2O = a 1,2-diacyl-sn-glycero-3-phosphate + choline + H(+). Functionally, hydrolyzes glycerol-phospholipids at the terminal phosphodiesteric bond. Plays an important role in various cellular processes. This chain is Phospholipase D alpha 1 (PLD1), found in Zea mays (Maize).